The following is a 944-amino-acid chain: Serine/threonine-protein kinase ATG1 (944 aa).

Residues 24-327 enclose the Protein kinase domain; that stretch reads FNIGSEIGKG…FENFFTHQVV (304 aa). ATP is bound by residues 30–38 and lysine 53; that span reads IGKGSFAQV. The Proton acceptor role is filled by aspartate 167. Residues 344-423 are disordered; sequence RQESRDPRSA…NSPREGGEGL (80 aa). Residues 356–367 are compositionally biased toward low complexity; the sequence is SGSPSLSSRSPR. The LIR signature appears at 428–431; it reads PVAQ. Disordered regions lie at residues 443 to 475, 512 to 572, 777 to 801, 860 to 895, and 925 to 944; these read YDSV…PITE, LGDA…GSAS, QLPD…AGSP, EGSG…EEAH, and AVRR…HASS. Polar residues-rich tracts occupy residues 447–459 and 516–549; these read TGRN…TSLL and SQRS…NALA. Over residues 563–572 the composition is skewed to low complexity; the sequence is SLSASPGSAS. The span at 785-801 shows a compositional bias: polar residues; sequence HPSNHGTESIASSAGSP. Over residues 865-881 the composition is skewed to basic and acidic residues; the sequence is ETRRLSTGKEAEREAVK. Residues 924–930 form a required for Cvt trafficking region; that stretch reads QAVRRRS.

This sequence belongs to the protein kinase superfamily. Ser/Thr protein kinase family. APG1/unc-51/ULK1 subfamily. As to quaternary structure, homodimer. Dimerization requires the presence of ATG13. Forms a ternary complex with ATG13 and ATG17.

Its subcellular location is the cytoplasm. The protein resides in the preautophagosomal structure membrane. It catalyses the reaction L-seryl-[protein] + ATP = O-phospho-L-seryl-[protein] + ADP + H(+). The catalysed reaction is L-threonyl-[protein] + ATP = O-phospho-L-threonyl-[protein] + ADP + H(+). Serine/threonine protein kinase involved in the cytoplasm to vacuole transport (Cvt) and found to be essential in autophagy, where it is required for the formation of autophagosomes. Involved in the clearance of protein aggregates which cannot be efficiently cleared by the proteasome. Required for selective autophagic degradation of the nucleus (nucleophagy) as well as for mitophagy which contributes to regulate mitochondrial quantity and quality by eliminating the mitochondria to a basal level to fulfill cellular energy requirements and preventing excess ROS production. Also involved in endoplasmic reticulum-specific autophagic process, in selective removal of ER-associated degradation (ERAD) substrates. Plays a key role in ATG9 and ATG23 cycling through the pre-autophagosomal structure and is necessary to promote ATG18 binding to ATG9 through phosphorylation of ATG9. Catalyzes phosphorylation of ATG4, decreasing the interaction between ATG4 and ATG8 and impairing deconjugation of PE-conjugated forms of ATG8. Autophagy is required for proper vegetative growth, asexual/sexual reproduction, and full virulence. Autophagy is particularly involved in the biosynthesis of deoxynivalenol (DON), an important virulence determinant. The protein is Serine/threonine-protein kinase ATG1 of Gibberella zeae (strain ATCC MYA-4620 / CBS 123657 / FGSC 9075 / NRRL 31084 / PH-1) (Wheat head blight fungus).